A 382-amino-acid chain; its full sequence is POU domain, class 3, transcription factor 2-A (382 aa).

Disordered stretches follow at residues 69–136 (PWAT…SSNG), 150–206 (GMIN…TPTS), and 348–382 (EKRMTPPGGTIPGAEDIYGASRDTPPHLGVQTSVQ). Residues 122 to 136 (STGSTHLSSMASSNG) show a composition bias toward polar residues. Basic and acidic residues predominate over residues 165 to 178 (LRDSHDDHHGDHGH). Residues 179–194 (QQVSQAQQQHSQLQGG) are compositionally biased toward low complexity. Positions 201-275 (EDTPTSDDLE…LLNKWLEEAD (75 aa)) constitute a POU-specific domain. A DNA-binding region (homeobox) is located at residues 293-352 (KRKKRTSIEVSVKGALESHFLKCPKPSAPEITSLADSLQLEKEVVRVWFCNRRQKEKRMT).

It belongs to the POU transcription factor family. Class-3 subfamily. Expressed in the developing brain and spinal cord. Also found in a restricted region of the auditory vesicle during development. In the adult, expression is restricted to the brain.

The protein localises to the nucleus. In terms of biological role, transcription factor that may be implicated in patterning of the central nervous system during early development. This is POU domain, class 3, transcription factor 2-A (pou3f2-a) from Xenopus laevis (African clawed frog).